The chain runs to 1342 residues: DNA-directed RNA polymerase subunit beta (1342 aa).

This sequence belongs to the RNA polymerase beta chain family. As to quaternary structure, the RNAP catalytic core consists of 2 alpha, 1 beta, 1 beta' and 1 omega subunit. When a sigma factor is associated with the core the holoenzyme is formed, which can initiate transcription.

The enzyme catalyses RNA(n) + a ribonucleoside 5'-triphosphate = RNA(n+1) + diphosphate. Functionally, DNA-dependent RNA polymerase catalyzes the transcription of DNA into RNA using the four ribonucleoside triphosphates as substrates. The protein is DNA-directed RNA polymerase subunit beta of Pasteurella multocida (strain Pm70).